A 141-amino-acid polypeptide reads, in one-letter code: Hemoglobin subunit alpha (141 aa).

The Globin domain occupies 1–141 (VLSANDKTNV…VSTVLTSKYR (141 aa)). Ser-3 is subject to Phosphoserine. Lys-7 carries the N6-succinyllysine modification. Thr-8 is modified (phosphothreonine). An N6-succinyllysine modification is found at Lys-11. Lys-16 bears the N6-acetyllysine; alternate mark. Lys-16 carries the post-translational modification N6-succinyllysine; alternate. A Phosphotyrosine modification is found at Tyr-24. Ser-35 is modified (phosphoserine). Lys-40 is modified (N6-succinyllysine). Phosphoserine is present on Ser-49. An O2-binding site is contributed by Gln-58. Residue His-87 participates in heme b binding. A Phosphothreonine modification is found at Thr-108. Ser-124 and Ser-131 each carry phosphoserine. Thr-134 and Thr-137 each carry phosphothreonine. Phosphoserine is present on Ser-138.

This sequence belongs to the globin family. In terms of assembly, heterotetramer of two alpha chains and two beta chains. As to expression, red blood cells.

Its function is as follows. Involved in oxygen transport from the lung to the various peripheral tissues. In terms of biological role, hemopressin acts as an antagonist peptide of the cannabinoid receptor CNR1. Hemopressin-binding efficiently blocks cannabinoid receptor CNR1 and subsequent signaling. The chain is Hemoglobin subunit alpha (HBA) from Didelphis virginiana (North American opossum).